The primary structure comprises 103 residues: Small ribosomal subunit protein uS10 (103 aa).

The protein belongs to the universal ribosomal protein uS10 family. As to quaternary structure, part of the 30S ribosomal subunit.

Its function is as follows. Involved in the binding of tRNA to the ribosomes. The chain is Small ribosomal subunit protein uS10 from Vibrio campbellii (strain ATCC BAA-1116).